The sequence spans 486 residues: ATP synthase subunit beta (486 aa).

164–171 is a binding site for ATP; that stretch reads GGAGVGKT.

The protein belongs to the ATPase alpha/beta chains family. In terms of assembly, F-type ATPases have 2 components, CF(1) - the catalytic core - and CF(0) - the membrane proton channel. CF(1) has five subunits: alpha(3), beta(3), gamma(1), delta(1), epsilon(1). CF(0) has four main subunits: a(1), b(1), b'(1) and c(9-12).

The protein resides in the cellular thylakoid membrane. It catalyses the reaction ATP + H2O + 4 H(+)(in) = ADP + phosphate + 5 H(+)(out). Its function is as follows. Produces ATP from ADP in the presence of a proton gradient across the membrane. The catalytic sites are hosted primarily by the beta subunits. This chain is ATP synthase subunit beta, found in Prochlorococcus marinus (strain MIT 9515).